We begin with the raw amino-acid sequence, 527 residues long: Bifunctional purine biosynthesis protein PurH (527 aa).

In terms of domain architecture, MGS-like spans 1–149 (MTADLLPVRR…KNFARVAVAT (149 aa)).

Belongs to the PurH family.

The enzyme catalyses (6R)-10-formyltetrahydrofolate + 5-amino-1-(5-phospho-beta-D-ribosyl)imidazole-4-carboxamide = 5-formamido-1-(5-phospho-D-ribosyl)imidazole-4-carboxamide + (6S)-5,6,7,8-tetrahydrofolate. It carries out the reaction IMP + H2O = 5-formamido-1-(5-phospho-D-ribosyl)imidazole-4-carboxamide. The protein operates within purine metabolism; IMP biosynthesis via de novo pathway; 5-formamido-1-(5-phospho-D-ribosyl)imidazole-4-carboxamide from 5-amino-1-(5-phospho-D-ribosyl)imidazole-4-carboxamide (10-formyl THF route): step 1/1. It functions in the pathway purine metabolism; IMP biosynthesis via de novo pathway; IMP from 5-formamido-1-(5-phospho-D-ribosyl)imidazole-4-carboxamide: step 1/1. This chain is Bifunctional purine biosynthesis protein PurH, found in Stenotrophomonas maltophilia (strain K279a).